A 903-amino-acid polypeptide reads, in one-letter code: Probable leucine--tRNA ligase, mitochondrial (903 aa).

Lysine 68 is subject to N6-acetyllysine. The short motif at 92 to 102 (YPSGKLHMGHV) is the 'HIGH' region element. Lysine 236 is modified (N6-acetyllysine). The short motif at 639–643 (KMSKS) is the 'KMSKS' region element. Lysine 642 is an ATP binding site. At serine 711 the chain carries Phosphoserine.

It belongs to the class-I aminoacyl-tRNA synthetase family.

The protein localises to the mitochondrion matrix. It catalyses the reaction tRNA(Leu) + L-leucine + ATP = L-leucyl-tRNA(Leu) + AMP + diphosphate. The polypeptide is Probable leucine--tRNA ligase, mitochondrial (LARS2) (Pongo abelii (Sumatran orangutan)).